A 42-amino-acid polypeptide reads, in one-letter code: Tachystatin-B2 (42 aa).

3 disulfides stabilise this stretch: Cys4/Cys20, Cys11/Cys25, and Cys19/Cys37.

As to expression, granular hemocytes, small secretory granules.

The protein resides in the secreted. Its function is as follows. Exhibits stronger antimicrobial activity against the Gram-positive bacteria (S.aureus (IC(50) is 7.4 ug/ml)) and fungi (C.albicans (IC(50) is 3.0 ug/ml) and P.pastoris (IC(50) is 0.1 ug/ml)) than Gram-negative bacteria (E.coli no inhibition at 100 ug/ml). Binds to chitin (4.3 uM are required to obtain 50% of binding). Does not cause hemolysis on sheep erythrocytes. Has no blocking activity on the P-type calcium channel. In Tachypleus tridentatus (Japanese horseshoe crab), this protein is Tachystatin-B2.